A 130-amino-acid polypeptide reads, in one-letter code: Small ribosomal subunit protein uS9 (130 aa).

The protein belongs to the universal ribosomal protein uS9 family.

The protein is Small ribosomal subunit protein uS9 of Thioalkalivibrio sulfidiphilus (strain HL-EbGR7).